The following is a 594-amino-acid chain: RING finger protein 207 (594 aa).

Residues 25–64 (CPLCHAQYERPCLLDCFHDFCAGCLRGRTADGRVACPLCQ) form an RING-type zinc finger. A B box-type; atypical zinc finger spans residues 93–145 (VEAVHCANCDLDCSKQDAETACFCNTCGQPLCARCRDETHRARMFARHDIVAL). Positions 98, 101, 127, and 132 each coordinate Zn(2+). The segment at 369–400 (NTLAGGSGPKVLMGPSCPSPVRKVSRSPVQKP) is disordered. Residues 424 to 458 (CRHYEDSYRGLQAEVQNLKDQVQELHRDLTKHHSL) adopt a coiled-coil conformation. Positions 552 to 594 (FQASADDESENPQTAYDASRNGETPASLLLPGSVASAEPPFVN) are disordered. Over residues 562–575 (NPQTAYDASRNGET) the composition is skewed to polar residues.

As to quaternary structure, interacts with the core-glycosylated, but not the fully glycosylated form of KCNH2/HERG. Interacts with DNAJA1 and HSPA8. Interacts (via the C-terminus) with HSPA1A; this interaction additively increases KCNH2 expression.

It localises to the cytoplasm. Functionally, plays a role in cardiac repolarization possibly by stabilizing membrane expression of the potassium channel KCNH2/HERG, or by assisting its synthesis, folding or export from the endoplasmic reticulum, in a heat shock protein-dependent manner. The chain is RING finger protein 207 (RNF207) from Oryctolagus cuniculus (Rabbit).